Reading from the N-terminus, the 251-residue chain is 2,3-bisphosphoglycerate-dependent phosphoglycerate mutase (251 aa).

Substrate contacts are provided by residues 11-18, 24-25, Arg63, 90-93, Lys101, 117-118, and 185-186; these read RHGNSDWN, TG, ERHY, RR, and GN. His12 acts as the Tele-phosphohistidine intermediate in catalysis. Catalysis depends on Glu90, which acts as the Proton donor/acceptor.

Belongs to the phosphoglycerate mutase family. BPG-dependent PGAM subfamily.

It carries out the reaction (2R)-2-phosphoglycerate = (2R)-3-phosphoglycerate. It participates in carbohydrate degradation; glycolysis; pyruvate from D-glyceraldehyde 3-phosphate: step 3/5. In terms of biological role, catalyzes the interconversion of 2-phosphoglycerate and 3-phosphoglycerate. The polypeptide is 2,3-bisphosphoglycerate-dependent phosphoglycerate mutase (Clavibacter sepedonicus (Clavibacter michiganensis subsp. sepedonicus)).